The primary structure comprises 203 residues: ATP-dependent Clp protease proteolytic subunit (203 aa).

The active-site Nucleophile is the Ser107. His132 is a catalytic residue.

This sequence belongs to the peptidase S14 family. As to quaternary structure, fourteen ClpP subunits assemble into 2 heptameric rings which stack back to back to give a disk-like structure with a central cavity, resembling the structure of eukaryotic proteasomes.

It localises to the cytoplasm. The catalysed reaction is Hydrolysis of proteins to small peptides in the presence of ATP and magnesium. alpha-casein is the usual test substrate. In the absence of ATP, only oligopeptides shorter than five residues are hydrolyzed (such as succinyl-Leu-Tyr-|-NHMec, and Leu-Tyr-Leu-|-Tyr-Trp, in which cleavage of the -Tyr-|-Leu- and -Tyr-|-Trp bonds also occurs).. Cleaves peptides in various proteins in a process that requires ATP hydrolysis. Has a chymotrypsin-like activity. Plays a major role in the degradation of misfolded proteins. The chain is ATP-dependent Clp protease proteolytic subunit from Pelagibacter ubique (strain HTCC1062).